Reading from the N-terminus, the 537-residue chain is CTP synthase (537 aa).

The segment at 1–267 (MTKYIFVTGG…DQIVCDHLKL (267 aa)) is amidoligase domain. CTP is bound at residue Ser-13. Ser-13 provides a ligand contact to UTP. 14 to 19 (SIGKGI) serves as a coordination point for ATP. Tyr-54 serves as a coordination point for L-glutamine. Residue Asp-71 coordinates ATP. Positions 71 and 141 each coordinate Mg(2+). CTP is bound by residues 148–150 (DIE), 188–193 (KTKPTQ), and Lys-224. Residues 188-193 (KTKPTQ) and Lys-224 contribute to the UTP site. 240 to 242 (RDV) serves as a coordination point for ATP. A Glutamine amidotransferase type-1 domain is found at 292 to 535 (RIALVGKYVE…VTAAVKNKNQ (244 aa)). Position 354 (Gly-354) interacts with L-glutamine. Cys-381 serves as the catalytic Nucleophile; for glutamine hydrolysis. Residues 382-385 (LGMQ), Glu-405, and Arg-463 each bind L-glutamine. Residues His-508 and Glu-510 contribute to the active site.

It belongs to the CTP synthase family. As to quaternary structure, homotetramer.

The catalysed reaction is UTP + L-glutamine + ATP + H2O = CTP + L-glutamate + ADP + phosphate + 2 H(+). The enzyme catalyses L-glutamine + H2O = L-glutamate + NH4(+). It catalyses the reaction UTP + NH4(+) + ATP = CTP + ADP + phosphate + 2 H(+). It functions in the pathway pyrimidine metabolism; CTP biosynthesis via de novo pathway; CTP from UDP: step 2/2. Its activity is regulated as follows. Allosterically activated by GTP, when glutamine is the substrate; GTP has no effect on the reaction when ammonia is the substrate. The allosteric effector GTP functions by stabilizing the protein conformation that binds the tetrahedral intermediate(s) formed during glutamine hydrolysis. Inhibited by the product CTP, via allosteric rather than competitive inhibition. Catalyzes the ATP-dependent amination of UTP to CTP with either L-glutamine or ammonia as the source of nitrogen. Regulates intracellular CTP levels through interactions with the four ribonucleotide triphosphates. This Streptococcus equi subsp. equi (strain 4047) protein is CTP synthase.